A 333-amino-acid polypeptide reads, in one-letter code: GTPase Obg (333 aa).

The Obg domain maps to 4-162; sequence GNFVDYVKIY…MDVILELKVL (159 aa). One can recognise an OBG-type G domain in the interval 163–332; the sequence is ADVGLVGFPN…LKDKLWKMLN (170 aa). GTP-binding positions include 169–176, 194–198, 216–219, 283–286, and 313–315; these read GFPNAGKS, FTTLK, DIPG, SKCD, and SSV. Residues S176 and T196 each coordinate Mg(2+).

It belongs to the TRAFAC class OBG-HflX-like GTPase superfamily. OBG GTPase family. Monomer. Mg(2+) serves as cofactor.

It localises to the cytoplasm. Its function is as follows. An essential GTPase which binds GTP, GDP and possibly (p)ppGpp with moderate affinity, with high nucleotide exchange rates and a fairly low GTP hydrolysis rate. Plays a role in control of the cell cycle, stress response, ribosome biogenesis and in those bacteria that undergo differentiation, in morphogenesis control. In Flavobacterium johnsoniae (strain ATCC 17061 / DSM 2064 / JCM 8514 / BCRC 14874 / CCUG 350202 / NBRC 14942 / NCIMB 11054 / UW101) (Cytophaga johnsonae), this protein is GTPase Obg.